The sequence spans 293 residues: Protein YIF1A (293 aa).

The tract at residues 1–27 (MAYHSAYGVHGSKHRTRAAPDPPPLFD) is disordered. A2 is modified (N-acetylalanine). Residues 2–138 (AYHSAYGVHG…PPRKDLNAPD (137 aa)) lie on the Cytoplasmic side of the membrane. Position 12 is a phosphoserine (S12). The chain crosses the membrane as a helical span at residues 139–159 (LYIPTMAFITYVLLAGMALGI). The Lumenal segment spans residues 160-174 (QQRFSPEVLGLCAST). A helical transmembrane segment spans residues 175 to 195 (ALVWVFMEVLALLLGLYLATV). Residues 196-203 (RSELSTFH) are Cytoplasmic-facing. A helical transmembrane segment spans residues 204–226 (LLAYSGYKYVGMILSVLTGLLFG). Residues 227 to 229 (SDG) are Lumenal-facing. The helical transmembrane segment at 230–249 (YYVALAWTSSALMYFIVRSL) threads the bilayer. At 250–271 (RTAASGPDSMGGPAPRQRLQLY) the chain is on the cytoplasmic side. A helical transmembrane segment spans residues 272-292 (LTLGAAAFQPLIIYWLTFHLV).

Belongs to the YIF1 family. In terms of assembly, interacts with YIPF5.

The protein resides in the endoplasmic reticulum membrane. It is found in the golgi apparatus membrane. Its subcellular location is the endoplasmic reticulum-Golgi intermediate compartment membrane. In terms of biological role, possible role in transport between endoplasmic reticulum and Golgi. This chain is Protein YIF1A (Yif1a), found in Mus musculus (Mouse).